We begin with the raw amino-acid sequence, 375 residues long: Formate dehydrogenase (375 aa).

Isoleucine 94 and asparagine 120 together coordinate substrate. NAD(+) is bound by residues 175–176 (RI), aspartate 196, 231–235 (PLHEK), threonine 257, aspartate 283, 312–315 (HMSG), and serine 358.

This sequence belongs to the D-isomer specific 2-hydroxyacid dehydrogenase family. FDH subfamily. Homodimer.

The protein resides in the cytoplasm. The enzyme catalyses formate + NAD(+) = CO2 + NADH. Functionally, catalyzes the NAD(+)-dependent oxidation of formate to carbon dioxide. Formate oxidation is the final step in the methanol oxidation pathway in methylotrophic microorganisms. Has a role in the detoxification of exogenous formate in non-methylotrophic organisms. The protein is Formate dehydrogenase of Neurospora crassa (strain ATCC 24698 / 74-OR23-1A / CBS 708.71 / DSM 1257 / FGSC 987).